We begin with the raw amino-acid sequence, 103 residues long: Glutaredoxin-C11 (103 aa).

The region spanning 1 to 102 is the Glutaredoxin domain; that stretch reads MERIRDLSSK…QMLKDAKAIW (102 aa). Cysteine 21 and cysteine 24 are disulfide-bonded.

This sequence belongs to the glutaredoxin family. CC-type subfamily.

The protein localises to the cytoplasm. Its function is as follows. Has a glutathione-disulfide oxidoreductase activity in the presence of NADPH and glutathione reductase. Reduces low molecular weight disulfides and proteins. This is Glutaredoxin-C11 (GRXC11) from Arabidopsis thaliana (Mouse-ear cress).